A 1243-amino-acid polypeptide reads, in one-letter code: Probable phospholipid-transporting ATPase 7 (1243 aa).

Residues 1–74 lie on the Cytoplasmic side of the membrane; the sequence is MGRRRIRSRI…TTRYNLITFL (74 aa). A helical transmembrane segment spans residues 75–96; that stretch reads PKCLYEQFHRVANFYFLVAAIL. Residues 97-100 lie on the Extracellular side of the membrane; the sequence is SVFP. A helical membrane pass occupies residues 101 to 123; sequence LSPFNKWSMIAPLIFVVGLSMGK. At 124–305 the chain is on the cytoplasmic side; it reads EALEDWRRFM…SRIEKRMDYI (182 aa). The helical transmembrane segment at 306 to 327 threads the bilayer; it reads IYTLFALLVLVSFISSLGFAVM. At 328–359 the chain is on the extracellular side; it reads TKMHMGDWWYLRPDKPERLTNPRNPFHAWVVH. The helical transmembrane segment at 360–377 threads the bilayer; that stretch reads LITAVLLYGYLIPISLYV. Over 378–941 the chain is Cytoplasmic; that stretch reads SIELVKVLQA…HGHWCYKRIA (564 aa). Asp425 (4-aspartylphosphate intermediate) is an active-site residue. A Glycyl lysine isopeptide (Lys-Gly) (interchain with G-Cter in ubiquitin) cross-link involves residue Lys623. Residues Asp886 and Asp890 each contribute to the Mg(2+) site. A helical membrane pass occupies residues 942 to 961; that stretch reads QMICYFFYKNITFGLTLFYF. The Extracellular segment spans residues 962–975; sequence EAFTGFSGQAIYND. The helical transmembrane segment at 976–995 threads the bilayer; that stretch reads SYLLLFNVILTSLPVIALGV. Residues 996 to 1025 are Cytoplasmic-facing; the sequence is FEQDVSSEVCLQFPALYQQGPKNLFFDWYR. A helical transmembrane segment spans residues 1026-1048; the sequence is IIGWMANGVYASVVIFSLNIGIF. Over 1049–1061 the chain is Extracellular; it reads HVQSFCSGGQTAD. The chain crosses the membrane as a helical span at residues 1062-1084; it reads MDAMGTAMFTCIIWAVNVQIALT. Residues 1085-1090 lie on the Cytoplasmic side of the membrane; that stretch reads MSHFTW. The helical transmembrane segment at 1091-1111 threads the bilayer; the sequence is IQHVLIWGSIVTWYIFLALFG. The Extracellular portion of the chain corresponds to 1112–1128; sequence MLPPKVSGNIFHMLSET. The chain crosses the membrane as a helical span at residues 1129-1153; the sequence is LAPAPIFWLTSLLVIAATTLPYLAY. At 1154 to 1243 the chain is on the cytoplasmic side; the sequence is ISFQRSLNPL…TDTTSTTQHS (90 aa).

This sequence belongs to the cation transport ATPase (P-type) (TC 3.A.3) family. Type IV subfamily.

It localises to the cell membrane. Its subcellular location is the endomembrane system. It carries out the reaction ATP + H2O + phospholipidSide 1 = ADP + phosphate + phospholipidSide 2.. In terms of biological role, involved in transport of phospholipids and in regulation of pollen plasma membrane lipid asymmetry. This Arabidopsis thaliana (Mouse-ear cress) protein is Probable phospholipid-transporting ATPase 7.